The sequence spans 243 residues: Pyridoxine 5'-phosphate synthase (243 aa).

N9 contacts 3-amino-2-oxopropyl phosphate. Residue 11–12 (DH) participates in 1-deoxy-D-xylulose 5-phosphate binding. R20 lines the 3-amino-2-oxopropyl phosphate pocket. H45 (proton acceptor) is an active-site residue. The 1-deoxy-D-xylulose 5-phosphate site is built by R47 and H52. Catalysis depends on E72, which acts as the Proton acceptor. Residue T102 coordinates 1-deoxy-D-xylulose 5-phosphate. H193 serves as the catalytic Proton donor. 3-amino-2-oxopropyl phosphate contacts are provided by residues G194 and 215–216 (GH).

The protein belongs to the PNP synthase family. Homooctamer; tetramer of dimers.

It is found in the cytoplasm. The enzyme catalyses 3-amino-2-oxopropyl phosphate + 1-deoxy-D-xylulose 5-phosphate = pyridoxine 5'-phosphate + phosphate + 2 H2O + H(+). Its pathway is cofactor biosynthesis; pyridoxine 5'-phosphate biosynthesis; pyridoxine 5'-phosphate from D-erythrose 4-phosphate: step 5/5. Functionally, catalyzes the complicated ring closure reaction between the two acyclic compounds 1-deoxy-D-xylulose-5-phosphate (DXP) and 3-amino-2-oxopropyl phosphate (1-amino-acetone-3-phosphate or AAP) to form pyridoxine 5'-phosphate (PNP) and inorganic phosphate. The chain is Pyridoxine 5'-phosphate synthase from Shigella sonnei (strain Ss046).